Here is a 545-residue protein sequence, read N- to C-terminus: CTP synthase (545 aa).

The amidoligase domain stretch occupies residues 1 to 266 (MATNYIFVTG…DTFVCDRFRL (266 aa)). S14 serves as a coordination point for CTP. S14 contacts UTP. ATP contacts are provided by residues 15–20 (SLGKGI) and D72. D72 and E140 together coordinate Mg(2+). CTP is bound by residues 147–149 (DIE), 187–192 (KTKPTQ), and K223. UTP contacts are provided by residues 187–192 (KTKPTQ) and K223. 239 to 241 (KDV) is a binding site for ATP. In terms of domain architecture, Glutamine amidotransferase type-1 spans 291 to 542 (TIGMVGKYVE…VKAAKDYQDS (252 aa)). G352 is an L-glutamine binding site. The active-site Nucleophile; for glutamine hydrolysis is the C379. L-glutamine-binding positions include 380 to 383 (LGMQ), E403, and R470. Active-site residues include H515 and E517.

This sequence belongs to the CTP synthase family. In terms of assembly, homotetramer.

The enzyme catalyses UTP + L-glutamine + ATP + H2O = CTP + L-glutamate + ADP + phosphate + 2 H(+). It carries out the reaction L-glutamine + H2O = L-glutamate + NH4(+). It catalyses the reaction UTP + NH4(+) + ATP = CTP + ADP + phosphate + 2 H(+). Its pathway is pyrimidine metabolism; CTP biosynthesis via de novo pathway; CTP from UDP: step 2/2. With respect to regulation, allosterically activated by GTP, when glutamine is the substrate; GTP has no effect on the reaction when ammonia is the substrate. The allosteric effector GTP functions by stabilizing the protein conformation that binds the tetrahedral intermediate(s) formed during glutamine hydrolysis. Inhibited by the product CTP, via allosteric rather than competitive inhibition. In terms of biological role, catalyzes the ATP-dependent amination of UTP to CTP with either L-glutamine or ammonia as the source of nitrogen. Regulates intracellular CTP levels through interactions with the four ribonucleotide triphosphates. The protein is CTP synthase of Actinobacillus pleuropneumoniae serotype 7 (strain AP76).